A 359-amino-acid chain; its full sequence is Nicotinate N-methyltransferase 1 (359 aa).

Aspartate 226 is a binding site for S-adenosyl-L-methionine.

The protein belongs to the class I-like SAM-binding methyltransferase superfamily. Cation-independent O-methyltransferase family. Highly expressed in anthers, pistils, developing siliques, and developing seeds.

The protein resides in the cytoplasm. The protein localises to the cytosol. The enzyme catalyses nicotinate + S-adenosyl-L-methionine = N-methylnicotinate + S-adenosyl-L-homocysteine. Involved in nicotinate detoxification in planta. Catalyzes the conversion of nicotinate to N-methylnicotinate, which is a detoxified form of endogenous nicotinate in planta. The sequence is that of Nicotinate N-methyltransferase 1 from Arabidopsis thaliana (Mouse-ear cress).